The following is a 262-amino-acid chain: Hydroxyethylthiazole kinase (262 aa).

Met-50 is a substrate binding site. Arg-125 and Thr-171 together coordinate ATP. Gly-198 contacts substrate.

This sequence belongs to the Thz kinase family. It depends on Mg(2+) as a cofactor.

It carries out the reaction 5-(2-hydroxyethyl)-4-methylthiazole + ATP = 4-methyl-5-(2-phosphooxyethyl)-thiazole + ADP + H(+). The protein operates within cofactor biosynthesis; thiamine diphosphate biosynthesis; 4-methyl-5-(2-phosphoethyl)-thiazole from 5-(2-hydroxyethyl)-4-methylthiazole: step 1/1. Its function is as follows. Catalyzes the phosphorylation of the hydroxyl group of 4-methyl-5-beta-hydroxyethylthiazole (THZ). The polypeptide is Hydroxyethylthiazole kinase (Shigella boydii serotype 4 (strain Sb227)).